We begin with the raw amino-acid sequence, 308 residues long: Coenzyme PQQ synthesis protein B (308 aa).

Belongs to the PqqB family.

It functions in the pathway cofactor biosynthesis; pyrroloquinoline quinone biosynthesis. Functionally, may be involved in the transport of PQQ or its precursor to the periplasm. The chain is Coenzyme PQQ synthesis protein B from Klebsiella pneumoniae subsp. pneumoniae (strain ATCC 700721 / MGH 78578).